The primary structure comprises 321 residues: tRNA uridine(34) hydroxylase (321 aa).

The region spanning 123 to 217 is the Rhodanese domain; that stretch reads SDPDVTVIDT…YLEEVPEGNS (95 aa). Cys-177 functions as the Cysteine persulfide intermediate in the catalytic mechanism. Residues 294–308 show a composition bias toward basic and acidic residues; that stretch reads RKGELHIGDRADIAK. Residues 294–321 are disordered; that stretch reads RKGELHIGDRADIAKSRTTQGAPSADGE.

It belongs to the TrhO family.

It catalyses the reaction uridine(34) in tRNA + AH2 + O2 = 5-hydroxyuridine(34) in tRNA + A + H2O. Functionally, catalyzes oxygen-dependent 5-hydroxyuridine (ho5U) modification at position 34 in tRNAs. This is tRNA uridine(34) hydroxylase from Teredinibacter turnerae (strain ATCC 39867 / T7901).